A 76-amino-acid polypeptide reads, in one-letter code: Acyl carrier protein (76 aa).

One can recognise a Carrier domain in the interval 1–76 (MATFDEVKEV…AAVDYIGSKQ (76 aa)). An O-(pantetheine 4'-phosphoryl)serine modification is found at serine 36.

This sequence belongs to the acyl carrier protein (ACP) family. In terms of processing, 4'-phosphopantetheine is transferred from CoA to a specific serine of apo-ACP by AcpS. This modification is essential for activity because fatty acids are bound in thioester linkage to the sulfhydryl of the prosthetic group.

Its subcellular location is the cytoplasm. The protein operates within lipid metabolism; fatty acid biosynthesis. Functionally, carrier of the growing fatty acid chain in fatty acid biosynthesis. The protein is Acyl carrier protein of Deinococcus geothermalis (strain DSM 11300 / CIP 105573 / AG-3a).